The sequence spans 84 residues: uncharacterized protein (84 aa).

Transmembrane regions (helical) follow at residues 4–20 (AYVLVSGFMLVLGIKYG), 27–49 (VWKAGLIILAGFAVIFAAAWIAF), and 59–81 (IGLAKSLSVVMGLIAGVLSVYVL).

It localises to the cell membrane. This is an uncharacterized protein from Archaeoglobus fulgidus (strain ATCC 49558 / DSM 4304 / JCM 9628 / NBRC 100126 / VC-16).